We begin with the raw amino-acid sequence, 88 residues long: Large ribosomal subunit protein bL31B (88 aa).

The protein belongs to the bacterial ribosomal protein bL31 family. Type B subfamily. In terms of assembly, part of the 50S ribosomal subunit.

The sequence is that of Large ribosomal subunit protein bL31B from Burkholderia orbicola (strain MC0-3).